The primary structure comprises 25 residues: Ocellatin-L1 (25 aa).

Residue leucine 25 is modified to Leucine amide.

It belongs to the frog skin active peptide (FSAP) family. Ocellatin subfamily. In terms of tissue distribution, expressed by the skin glands.

It is found in the secreted. Functionally, antimicrobial peptide with activity against Gram-negative bacteria but without activity against Gram-positive bacteria. Shows a low activity in stimulating insulin release from rat BRIN-BD11 beta cells, and acts without loss of integrity of the plasma membrane. Has very low hemolytic activity. Shows weak amphipathicity in its alpha-helical conformation. This Leptodactylus laticeps (Santa Fe frog) protein is Ocellatin-L1.